We begin with the raw amino-acid sequence, 173 residues long: Lipoprotein signal peptidase (173 aa).

3 helical membrane-spanning segments follow: residues 11-31, 69-89, and 93-113; these read FGLI…WIVT, TTRW…AFWM, and QAKG…GNIV. Catalysis depends on residues Asp123 and Asp142. The helical transmembrane segment at 134-154 threads the bilayer; sequence PFMIFNVADACITIGVLLLVA.

The protein belongs to the peptidase A8 family.

It localises to the cell inner membrane. It catalyses the reaction Release of signal peptides from bacterial membrane prolipoproteins. Hydrolyzes -Xaa-Yaa-Zaa-|-(S,diacylglyceryl)Cys-, in which Xaa is hydrophobic (preferably Leu), and Yaa (Ala or Ser) and Zaa (Gly or Ala) have small, neutral side chains.. It participates in protein modification; lipoprotein biosynthesis (signal peptide cleavage). Functionally, this protein specifically catalyzes the removal of signal peptides from prolipoproteins. The polypeptide is Lipoprotein signal peptidase (Sphingopyxis alaskensis (strain DSM 13593 / LMG 18877 / RB2256) (Sphingomonas alaskensis)).